Here is a 199-residue protein sequence, read N- to C-terminus: RNA-free ribonuclease P (199 aa).

This sequence belongs to the HARP family.

The enzyme catalyses Endonucleolytic cleavage of RNA, removing 5'-extranucleotides from tRNA precursor.. In terms of biological role, RNA-free RNase P that catalyzes the removal of the 5'-leader sequence from pre-tRNA to produce the mature 5'-terminus. The polypeptide is RNA-free ribonuclease P (Pyrococcus furiosus (strain ATCC 43587 / DSM 3638 / JCM 8422 / Vc1)).